We begin with the raw amino-acid sequence, 181 residues long: Trypsin inhibitor B (181 aa).

Cystine bridges form between cysteine 39/cysteine 86 and cysteine 136/cysteine 145.

Belongs to the protease inhibitor I3 (leguminous Kunitz-type inhibitor) family.

Functionally, inhibition of trypsin. The chain is Trypsin inhibitor B from Glycine max (Soybean).